The sequence spans 384 residues: Queuine tRNA-ribosyltransferase (384 aa).

Asp-103 acts as the Proton acceptor in catalysis. Residues 103–107 (DSGGF), Asp-157, Gln-200, and Gly-227 each bind substrate. Residues 258-264 (GVGTYRE) form an RNA binding region. Asp-277 (nucleophile) is an active-site residue. Residues 282–286 (TRLAR) form an RNA binding; important for wobble base 34 recognition region. Positions 315, 317, 320, and 346 each coordinate Zn(2+).

It belongs to the queuine tRNA-ribosyltransferase family. In terms of assembly, homodimer. Within each dimer, one monomer is responsible for RNA recognition and catalysis, while the other monomer binds to the replacement base PreQ1. Requires Zn(2+) as cofactor.

It catalyses the reaction 7-aminomethyl-7-carbaguanine + guanosine(34) in tRNA = 7-aminomethyl-7-carbaguanosine(34) in tRNA + guanine. Its pathway is tRNA modification; tRNA-queuosine biosynthesis. Functionally, catalyzes the base-exchange of a guanine (G) residue with the queuine precursor 7-aminomethyl-7-deazaguanine (PreQ1) at position 34 (anticodon wobble position) in tRNAs with GU(N) anticodons (tRNA-Asp, -Asn, -His and -Tyr). Catalysis occurs through a double-displacement mechanism. The nucleophile active site attacks the C1' of nucleotide 34 to detach the guanine base from the RNA, forming a covalent enzyme-RNA intermediate. The proton acceptor active site deprotonates the incoming PreQ1, allowing a nucleophilic attack on the C1' of the ribose to form the product. After dissociation, two additional enzymatic reactions on the tRNA convert PreQ1 to queuine (Q), resulting in the hypermodified nucleoside queuosine (7-(((4,5-cis-dihydroxy-2-cyclopenten-1-yl)amino)methyl)-7-deazaguanosine). This Synechococcus elongatus (strain ATCC 33912 / PCC 7942 / FACHB-805) (Anacystis nidulans R2) protein is Queuine tRNA-ribosyltransferase.